The following is a 454-amino-acid chain: NADH-quinone oxidoreductase subunit H (454 aa).

Helical transmembrane passes span 18 to 38 (WWLVVVKAVFCFAFLMITVLF), 88 to 108 (VVYVLAPIVAAIPAFMAIAVI), 131 to 151 (LPIAMLYILAVASVGIYGIVL), 172 to 192 (MISYEIAMGAAFASVFLYSGS), 206 to 226 (WYIVLLPVSFVIYIVTMVGET), 256 to 276 (FMLAEYVNMVTVSAVSTTLFL), 296 to 316 (WWPMLWFVVKVQLLLFFFIWL), 328 to 348 (LMKLGWKVLIPVSVVWLMLVA), and 360 to 380 (FADIALYVGGGVLVLLLLSFV). Positions 395-454 (AEEPAAFDPMAGGFPVPPLPGQTLPPVPRRRPRRDRELIVSGGPDTASDGPANGKEASDG) are disordered. Pro residues predominate over residues 409 to 421 (PVPPLPGQTLPPV).

This sequence belongs to the complex I subunit 1 family. In terms of assembly, NDH-1 is composed of 14 different subunits. Subunits NuoA, H, J, K, L, M, N constitute the membrane sector of the complex.

The protein localises to the cell membrane. It catalyses the reaction a quinone + NADH + 5 H(+)(in) = a quinol + NAD(+) + 4 H(+)(out). NDH-1 shuttles electrons from NADH, via FMN and iron-sulfur (Fe-S) centers, to quinones in the respiratory chain. The immediate electron acceptor for the enzyme in this species is believed to be ubiquinone. Couples the redox reaction to proton translocation (for every two electrons transferred, four hydrogen ions are translocated across the cytoplasmic membrane), and thus conserves the redox energy in a proton gradient. This subunit may bind ubiquinone. The protein is NADH-quinone oxidoreductase subunit H of Streptomyces avermitilis (strain ATCC 31267 / DSM 46492 / JCM 5070 / NBRC 14893 / NCIMB 12804 / NRRL 8165 / MA-4680).